Consider the following 408-residue polypeptide: BRCA1-A complex subunit Abraxas 1 (408 aa).

The MPN domain maps to 7 to 155 (TAVMSGFVFG…KSTHRLEYAL (149 aa)). Residues 210–273 (ALAEVNRISN…EETGNKVSEA (64 aa)) adopt a coiled-coil conformation. The segment covering 360-372 (LQLQKQHSQNGDS) has biased composition (polar residues). Residues 360-408 (LQLQKQHSQNGDSEGSDSERPLCNSGTETDGDILESLHMDVSRSKSPIF) form a disordered region. Serine 405 is subject to Phosphoserine. Residues 405–408 (SPIF) carry the pSXXF motif motif.

This sequence belongs to the FAM175 family. Abraxas subfamily. As to quaternary structure, component of the BRCA1-A complex. Component of the BRISC complex. Interacts directly (when phosphorylated at Ser-405) with brca1. Homodimer. The phosphorylated homodimer can interact directly with two brca1 chains, giving rise to a heterotetramer. Phosphorylation of Ser-405 of the pSXXF motif by ATM or ATR constitutes a specific recognition motif for the BRCT domain of BRCA1.

The protein resides in the nucleus. Involved in DNA damage response and double-strand break (DSB) repair. Component of the BRCA1-A complex, acting as a central scaffold protein that assembles the various components of the complex and mediates the recruitment of brca1. The BRCA1-A complex specifically recognizes 'Lys-63'-linked ubiquitinated histones H2A and H2AX at DNA lesion sites, leading to target the brca1-bard1 heterodimer to sites of DNA damage at DSBs. This complex also possesses deubiquitinase activity that specifically removes 'Lys-63'-linked ubiquitin on histones H2A and H2AX. The chain is BRCA1-A complex subunit Abraxas 1 from Xenopus tropicalis (Western clawed frog).